Consider the following 156-residue polypeptide: Ribosomal RNA large subunit methyltransferase H (156 aa).

S-adenosyl-L-methionine-binding positions include Leu74, Gly105, and 124–129 (LSKLTL).

Belongs to the RNA methyltransferase RlmH family. In terms of assembly, homodimer.

It localises to the cytoplasm. The catalysed reaction is pseudouridine(1915) in 23S rRNA + S-adenosyl-L-methionine = N(3)-methylpseudouridine(1915) in 23S rRNA + S-adenosyl-L-homocysteine + H(+). Specifically methylates the pseudouridine at position 1915 (m3Psi1915) in 23S rRNA. The sequence is that of Ribosomal RNA large subunit methyltransferase H from Legionella pneumophila (strain Lens).